A 320-amino-acid chain; its full sequence is MLFRFGFVANAMCLWDASPAKTLTYARYTKLSRSERKDALLSVTKANLTNTLRTIHYVVGHGIPLYRFSSSIVPLATHPDVLWDFVTPFRQEFCEIGGLVRKYDLRTSFHPNQFTLFTSPKQEITANAVKDMAYHYDMLDAMGIANRSVINIHVGGAYGDKQSALGRFRVNLKELPDVIKQRMTLENDDKTYTSEETLSVCEQEGIPFVFDYHHFYANPTDDADLDDILPRMIKTWQRIGLKPKVHLSSPKSESAIRSHADYVDANFILPVLERFRQWDTDIDFMIEAKEKDRALLRLVEELSAIRGVKRLAGGVLKWKA.

This sequence belongs to the uve1/UvsE family.

Its function is as follows. Component in a DNA repair pathway. Removal of UV LIGHT damaged nucleotides. Recognizes pyrimidine dimers and cleave a phosphodiester bond immediately 5' to the lesion. This is UV DNA damage endonuclease from Bacillus velezensis (strain DSM 23117 / BGSC 10A6 / LMG 26770 / FZB42) (Bacillus amyloliquefaciens subsp. plantarum).